We begin with the raw amino-acid sequence, 198 residues long: Imidazoleglycerol-phosphate dehydratase (198 aa).

Belongs to the imidazoleglycerol-phosphate dehydratase family.

The protein resides in the cytoplasm. It catalyses the reaction D-erythro-1-(imidazol-4-yl)glycerol 3-phosphate = 3-(imidazol-4-yl)-2-oxopropyl phosphate + H2O. It participates in amino-acid biosynthesis; L-histidine biosynthesis; L-histidine from 5-phospho-alpha-D-ribose 1-diphosphate: step 6/9. The chain is Imidazoleglycerol-phosphate dehydratase from Magnetococcus marinus (strain ATCC BAA-1437 / JCM 17883 / MC-1).